The chain runs to 669 residues: Gametogenetin-binding protein 2 (669 aa).

2 disordered regions span residues 375-421 and 452-475; these read QEKK…GNPC and PHSN…SQEG. Basic residues predominate over residues 376–388; it reads EKKRQKKNRKKNK. Residues 398 to 408 are compositionally biased toward polar residues; the sequence is ETKSANPSQKN.

It localises to the cytoplasm. May be involved in spermatogenesis. In Xenopus tropicalis (Western clawed frog), this protein is Gametogenetin-binding protein 2 (ggnbp2).